Consider the following 144-residue polypeptide: HTH-type transcriptional regulator LrpC (144 aa).

An HTH asnC-type domain is found at 3 to 64 (LDQIDLNIIE…EVDQKKLGLP (62 aa)). A DNA-binding region (H-T-H motif) is located at residues 22–41 (MRELGRKIKLSPPSVTERVR).

Its function is as follows. Transcriptional regulator with a possible role in regulation of amino acid metabolism. Plays a role in the growth phase transition. The sequence is that of HTH-type transcriptional regulator LrpC (lrpC) from Bacillus subtilis (strain 168).